Here is a 267-residue protein sequence, read N- to C-terminus: Ribonuclease HII (267 aa).

The 189-residue stretch at 57 to 245 folds into the RNase H type-2 domain; the sequence is WPVAGCDEVG…VVAARERHRA (189 aa). A divalent metal cation-binding residues include aspartate 63, glutamate 64, and aspartate 154.

The protein belongs to the RNase HII family. Mn(2+) serves as cofactor. Requires Mg(2+) as cofactor.

The protein resides in the cytoplasm. It carries out the reaction Endonucleolytic cleavage to 5'-phosphomonoester.. Functionally, endonuclease that specifically degrades the RNA of RNA-DNA hybrids. The polypeptide is Ribonuclease HII (Nitrobacter hamburgensis (strain DSM 10229 / NCIMB 13809 / X14)).